The sequence spans 247 residues: Chloride intracellular channel protein 2 (247 aa).

The tract at residues 1-94 (MSGLRPGTQV…KIEEFLEQTL (94 aa)) is N-terminal. The tract at residues 1–96 (MSGLRPGTQV…EEFLEQTLAP (96 aa)) is required for insertion into the membrane. A glutathione-binding site is contributed by glutamate 25. The G-site motif lies at 30-33 (CPFC). Cysteine 30 and cysteine 33 are disulfide-bonded. The helical transmembrane segment at 32–52 (FCQRLFMILWLKGVKFNVTTV) threads the bilayer. The GST C-terminal domain maps to 76-239 (NKELKTDFIK…PEDKEIENTY (164 aa)). The joint loop stretch occupies residues 95 to 106 (APPRYPHLSPKY). Residues 107–247 (KESFDVGCNL…TYANVAKQKS (141 aa)) are C-terminal. The foot loop stretch occupies residues 151–171 (NTPLLDEIDPDSAEEPPVSRR). Residue histidine 227 participates in glutathione binding.

The protein belongs to the chloride channel CLIC family. As to quaternary structure, monomer. Interacts with TRAPPC2 and RYR2. As to expression, expressed in adult and fetal brain, heart, skeletal muscle, liver, lung, and spleen. Detected in adult stomach and testis. Expressed in fetal thymus and kidney.

Its subcellular location is the cytoplasm. It is found in the membrane. It catalyses the reaction chloride(in) = chloride(out). The catalysed reaction is tert-butyl hydroperoxide + 2 glutathione = tert-butanol + glutathione disulfide + H2O. It carries out the reaction cumene hydroperoxide + 2 glutathione = 2-phenylpropan-2-ol + glutathione disulfide + H2O. Its activity is regulated as follows. The channel conductance is regulated by pH. Its function is as follows. In the soluble state, catalyzes glutaredoxin-like thiol disulfide exchange reactions with reduced glutathione as electron donor. Displays weak glutathione peroxidase activity. Can insert into membranes and form chloride ion channels. Membrane insertion seems to be redox-regulated and may occur only under oxidizing conditions. Modulates the activity of RYR2 and inhibits calcium influx. The sequence is that of Chloride intracellular channel protein 2 from Homo sapiens (Human).